The sequence spans 579 residues: Tyrosine 3-monooxygenase (579 aa).

Over residues 105 to 114 the composition is skewed to acidic residues; that stretch reads VEFESVEQEQ. The segment at 105-132 is disordered; that stretch reads VEFESVEQEQSESQSQEPEGNQQPTKND. The Fe cation site is built by histidine 409, histidine 414, and glutamate 454.

This sequence belongs to the biopterin-dependent aromatic amino acid hydroxylase family. Requires Fe(2+) as cofactor.

It is found in the cytoplasm. It localises to the perinuclear region. The protein localises to the cell projection. Its subcellular location is the axon. It carries out the reaction (6R)-L-erythro-5,6,7,8-tetrahydrobiopterin + L-tyrosine + O2 = (4aS,6R)-4a-hydroxy-L-erythro-5,6,7,8-tetrahydrobiopterin + L-dopa. It participates in catecholamine biosynthesis; dopamine biosynthesis; dopamine from L-tyrosine: step 1/2. Phosphorylation leads to an increase in the catalytic activity. Its function is as follows. Plays an important role in the physiology of adrenergic neurons. This Drosophila melanogaster (Fruit fly) protein is Tyrosine 3-monooxygenase (ple).